The chain runs to 441 residues: Probable carboxypeptidase NFIA_052450 (441 aa).

Positions 1-16 (MKPLSSLLLSAALSAA) are cleaved as a signal peptide. N-linked (GlcNAc...) asparagine glycans are attached at residues Asn-88 and Asn-150. Asp-166 contacts Zn(2+). Glu-198 serves as the catalytic Proton acceptor. Glu-199 contributes to the Zn(2+) binding site. N-linked (GlcNAc...) asparagine glycosylation is found at Asn-354 and Asn-373.

Belongs to the peptidase M20A family. Zn(2+) serves as cofactor.

The protein resides in the secreted. This Neosartorya fischeri (strain ATCC 1020 / DSM 3700 / CBS 544.65 / FGSC A1164 / JCM 1740 / NRRL 181 / WB 181) (Aspergillus fischerianus) protein is Probable carboxypeptidase NFIA_052450.